We begin with the raw amino-acid sequence, 540 residues long: Chaperonin GroEL (540 aa).

ATP contacts are provided by residues 29-32 (TLGP), 86-90 (DGTTT), glycine 413, and aspartate 493. Residues 520–540 (AEKPEPKPAPGPADPGAGMDF) form a disordered region.

Belongs to the chaperonin (HSP60) family. In terms of assembly, forms a cylinder of 14 subunits composed of two heptameric rings stacked back-to-back. Interacts with the co-chaperonin GroES.

It localises to the cytoplasm. It carries out the reaction ATP + H2O + a folded polypeptide = ADP + phosphate + an unfolded polypeptide.. Together with its co-chaperonin GroES, plays an essential role in assisting protein folding. The GroEL-GroES system forms a nano-cage that allows encapsulation of the non-native substrate proteins and provides a physical environment optimized to promote and accelerate protein folding. The polypeptide is Chaperonin GroEL (Tropheryma whipplei (Whipple's bacillus)).